The chain runs to 432 residues: Gamma-glutamyl phosphate reductase (432 aa).

This sequence belongs to the gamma-glutamyl phosphate reductase family.

It localises to the cytoplasm. The catalysed reaction is L-glutamate 5-semialdehyde + phosphate + NADP(+) = L-glutamyl 5-phosphate + NADPH + H(+). It participates in amino-acid biosynthesis; L-proline biosynthesis; L-glutamate 5-semialdehyde from L-glutamate: step 2/2. Its function is as follows. Catalyzes the NADPH-dependent reduction of L-glutamate 5-phosphate into L-glutamate 5-semialdehyde and phosphate. The product spontaneously undergoes cyclization to form 1-pyrroline-5-carboxylate. In Methylorubrum populi (strain ATCC BAA-705 / NCIMB 13946 / BJ001) (Methylobacterium populi), this protein is Gamma-glutamyl phosphate reductase.